The primary structure comprises 466 residues: 23S rRNA (uracil(1939)-C(5))-methyltransferase RlmD (466 aa).

The TRAM domain occupies 1–54 (MVDVLNIESLDLEARGIAHRDGKVLFVEGALPGERVTVQTVRRKPSYEIAKVEE). [4Fe-4S] cluster is bound by residues C67, C73, C76, and C155. S-adenosyl-L-methionine contacts are provided by Q264, F293, N298, E314, N342, and D363. Residue C393 is the Nucleophile of the active site.

It belongs to the class I-like SAM-binding methyltransferase superfamily. RNA M5U methyltransferase family. RlmD subfamily.

It carries out the reaction uridine(1939) in 23S rRNA + S-adenosyl-L-methionine = 5-methyluridine(1939) in 23S rRNA + S-adenosyl-L-homocysteine + H(+). Catalyzes the formation of 5-methyl-uridine at position 1939 (m5U1939) in 23S rRNA. The chain is 23S rRNA (uracil(1939)-C(5))-methyltransferase RlmD from Bordetella parapertussis (strain 12822 / ATCC BAA-587 / NCTC 13253).